Consider the following 549-residue polypeptide: CTP synthase (549 aa).

Positions 1-266 are amidoligase domain; the sequence is MSAKYIFVTG…DKLALRYLHL (266 aa). Ser14 serves as a coordination point for CTP. Ser14 is a binding site for UTP. ATP-binding positions include 15-20 and Asp72; that span reads SLGKGL. Positions 72 and 140 each coordinate Mg(2+). Residues 147–149, 187–192, and Lys223 contribute to the CTP site; these read DIE and KTKPTQ. Residues 187 to 192 and Lys223 contribute to the UTP site; that span reads KTKPTQ. 239 to 241 is a binding site for ATP; that stretch reads KDV. The Glutamine amidotransferase type-1 domain maps to 291–533; that stretch reads SIGIVGKYVE…VKAAYQNHKP (243 aa). Position 353 (Gly353) interacts with L-glutamine. Catalysis depends on Cys380, which acts as the Nucleophile; for glutamine hydrolysis. L-glutamine-binding positions include 381 to 384, Glu404, and Arg461; that span reads LGMQ. Catalysis depends on residues His506 and Glu508.

It belongs to the CTP synthase family. In terms of assembly, homotetramer.

It carries out the reaction UTP + L-glutamine + ATP + H2O = CTP + L-glutamate + ADP + phosphate + 2 H(+). The enzyme catalyses L-glutamine + H2O = L-glutamate + NH4(+). It catalyses the reaction UTP + NH4(+) + ATP = CTP + ADP + phosphate + 2 H(+). It functions in the pathway pyrimidine metabolism; CTP biosynthesis via de novo pathway; CTP from UDP: step 2/2. With respect to regulation, allosterically activated by GTP, when glutamine is the substrate; GTP has no effect on the reaction when ammonia is the substrate. The allosteric effector GTP functions by stabilizing the protein conformation that binds the tetrahedral intermediate(s) formed during glutamine hydrolysis. Inhibited by the product CTP, via allosteric rather than competitive inhibition. Its function is as follows. Catalyzes the ATP-dependent amination of UTP to CTP with either L-glutamine or ammonia as the source of nitrogen. Regulates intracellular CTP levels through interactions with the four ribonucleotide triphosphates. The chain is CTP synthase from Acidobacterium capsulatum (strain ATCC 51196 / DSM 11244 / BCRC 80197 / JCM 7670 / NBRC 15755 / NCIMB 13165 / 161).